The sequence spans 213 residues: Pyrrolidone-carboxylate peptidase (213 aa).

Residues glutamate 78, cysteine 141, and histidine 165 contribute to the active site.

It belongs to the peptidase C15 family. In terms of assembly, homotetramer.

Its subcellular location is the cytoplasm. It catalyses the reaction Release of an N-terminal pyroglutamyl group from a polypeptide, the second amino acid generally not being Pro.. Its function is as follows. Removes 5-oxoproline from various penultimate amino acid residues except L-proline. This is Pyrrolidone-carboxylate peptidase from Clostridium perfringens (strain ATCC 13124 / DSM 756 / JCM 1290 / NCIMB 6125 / NCTC 8237 / Type A).